The sequence spans 174 residues: uncharacterized protein (174 aa).

The next 2 helical transmembrane spans lie at 8–28 and 146–166; these read FLFI…NYVF and IVSW…IQFI.

It localises to the cell membrane. This is an uncharacterized protein from Haemophilus influenzae (strain ATCC 51907 / DSM 11121 / KW20 / Rd).